Reading from the N-terminus, the 204-residue chain is LTTGLSSWFHNYGNLLLMLGFLLMIMTMIQWWRDIIRESTFQGFHTTKVYNGLRWGMMLFIVSEICFFFAFFWAYFHSSLAPNTDIGACWPPINIYPLNPFQIPLLNTAILLSSGVSVTWAHHSLMSNKLNPAIHSMTITITLGFYFTFLQMMEYIEASFSISDSIYGSTFFVATGFHGLHVIIGSTFLFMCLIRIIMNHFSST.

Transmembrane regions (helical) follow at residues Tyr12–Trp32, Gly56–Phe76, Phe101–Ala121, Ala133–Met153, and Phe171–Met191.

This sequence belongs to the cytochrome c oxidase subunit 3 family. Component of the cytochrome c oxidase (complex IV, CIV), a multisubunit enzyme composed of a catalytic core of 3 subunits and several supernumerary subunits. The complex exists as a monomer or a dimer and forms supercomplexes (SCs) in the inner mitochondrial membrane with ubiquinol-cytochrome c oxidoreductase (cytochrome b-c1 complex, complex III, CIII).

The protein localises to the mitochondrion inner membrane. It catalyses the reaction 4 Fe(II)-[cytochrome c] + O2 + 8 H(+)(in) = 4 Fe(III)-[cytochrome c] + 2 H2O + 4 H(+)(out). In terms of biological role, component of the cytochrome c oxidase, the last enzyme in the mitochondrial electron transport chain which drives oxidative phosphorylation. The respiratory chain contains 3 multisubunit complexes succinate dehydrogenase (complex II, CII), ubiquinol-cytochrome c oxidoreductase (cytochrome b-c1 complex, complex III, CIII) and cytochrome c oxidase (complex IV, CIV), that cooperate to transfer electrons derived from NADH and succinate to molecular oxygen, creating an electrochemical gradient over the inner membrane that drives transmembrane transport and the ATP synthase. Cytochrome c oxidase is the component of the respiratory chain that catalyzes the reduction of oxygen to water. Electrons originating from reduced cytochrome c in the intermembrane space (IMS) are transferred via the dinuclear copper A center (CU(A)) of subunit 2 and heme A of subunit 1 to the active site in subunit 1, a binuclear center (BNC) formed by heme A3 and copper B (CU(B)). The BNC reduces molecular oxygen to 2 water molecules using 4 electrons from cytochrome c in the IMS and 4 protons from the mitochondrial matrix. The sequence is that of Cytochrome c oxidase subunit 3 (COIII) from Enteroctopus dofleini (North Pacific giant octopus).